The following is a 363-amino-acid chain: Chorismate synthase (363 aa).

Arg48 and Arg54 together coordinate NADP(+). FMN is bound by residues 125-127, 237-238, Gly277, 292-296, and Arg318; these read RSS, NA, and KPTSS.

This sequence belongs to the chorismate synthase family. Homotetramer. It depends on FMNH2 as a cofactor.

It catalyses the reaction 5-O-(1-carboxyvinyl)-3-phosphoshikimate = chorismate + phosphate. The protein operates within metabolic intermediate biosynthesis; chorismate biosynthesis; chorismate from D-erythrose 4-phosphate and phosphoenolpyruvate: step 7/7. Functionally, catalyzes the anti-1,4-elimination of the C-3 phosphate and the C-6 proR hydrogen from 5-enolpyruvylshikimate-3-phosphate (EPSP) to yield chorismate, which is the branch point compound that serves as the starting substrate for the three terminal pathways of aromatic amino acid biosynthesis. This reaction introduces a second double bond into the aromatic ring system. This Stutzerimonas stutzeri (strain A1501) (Pseudomonas stutzeri) protein is Chorismate synthase.